We begin with the raw amino-acid sequence, 370 residues long: MKLLLFILMISSIIIVPVGQAQRIKDLASVQGVRSNQLVGYGLVVGLPGTGEQSPFTEQSFRTMLSNFGISLDSSLKPKIKNVAAVAVHAELPPFLKPGQTIDVTVSSVGEAASLRGGTLLQTFLKGLDGKVYAVAQGSMVVSGFGAEGADGSKIVANTPTVGRIANGALIERAVPSGFMQNDFLTLNLNYPDFSTAKILADTINQRLGADPDKGYVIATPIDAASVRVSAPRDVGQRVGFLATLENFEFMPAKAPARIVINSRTGTIVIGQDVRLLPAAITHGGLTVTISENQQVTQPNPLGQGDTVVTDQSIIDVNLDDTRMFKFDPGVTLDQLVRAVNEVGAAPGDLMAILEALSEAGALQGELVVI.

The N-terminal stretch at 1–21 (MKLLLFILMISSIIIVPVGQA) is a signal peptide.

Belongs to the FlgI family. As to quaternary structure, the basal body constitutes a major portion of the flagellar organelle and consists of four rings (L,P,S, and M) mounted on a central rod.

Its subcellular location is the periplasm. It is found in the bacterial flagellum basal body. Functionally, assembles around the rod to form the L-ring and probably protects the motor/basal body from shearing forces during rotation. The protein is Flagellar P-ring protein of Pseudoalteromonas atlantica (strain T6c / ATCC BAA-1087).